The sequence spans 408 residues: Diguanylate cyclase DgcN (408 aa).

At 1 to 24 (MMDNDNSLNKRPTFKRALRNISMT) the chain is on the cytoplasmic side. Residues 25 to 45 (SIFITMMLIWLLLSVTSVLTL) traverse the membrane as a helical segment. Residues 46-52 (KQYAQKN) lie on the Periplasmic side of the membrane. The helical transmembrane segment at 53-73 (LALTAATMTYSLEAAVVFADG) threads the bilayer. Over 74–112 (PAATETLAALGQQGQFSTAEVRDKQQNILASWHYTRKDP) the chain is Cytoplasmic. Residues 113–133 (GDTFSNFISHWLFPAPIIQPI) form a helical membrane-spanning segment. Residues 134 to 154 (RHNGETIGEVRLTARDSSISH) lie on the Periplasmic side of the membrane. The chain crosses the membrane as a helical span at residues 155-175 (FIWFSLAVLTGCILLASGIAI). The Cytoplasmic portion of the chain corresponds to 176-408 (TLTRHLHNGL…KHQRAEKLVR (233 aa)). In terms of domain architecture, HAMP spans 183-236 (NGLVEALKNITDVVHDVRSNRNFSRRVSEERIAEFHRFALDFNSLLDEMEEWQL). The GGDEF domain maps to 278–408 (KTSALLFLDG…KHQRAEKLVR (131 aa)). A Mg(2+)-binding site is contributed by D286. The substrate site is built by N294, H299, and D303. A Mg(2+)-binding site is contributed by D329. D329 serves as the catalytic Proton acceptor.

As to quaternary structure, homodimer. Interacts with the cell division proteins FtsZ and ZipA. The cofactor is Mg(2+).

The protein resides in the cell inner membrane. It carries out the reaction 2 GTP = 3',3'-c-di-GMP + 2 diphosphate. It participates in purine metabolism; 3',5'-cyclic di-GMP biosynthesis. Inhibited by YfiR, which prevents relocation to the midcell. A reductive stress signal is required to inactivate YfiR and turn on the DGC activity of DgcN. Functionally, bifunctional protein that catalyzes the synthesis of cyclic-di-GMP (c-di-GMP) in response to reductive stress and then dynamically relocates to the division site to arrest cell division in response to envelope stress. In the presence of high intracellular c-di-GMP levels, and in response to envelope stress, interacts with cell division proteins and halts cell division, without disassembling the Z ring, but by blocking its further progress toward cytokinesis. Part of a network that regulates cell motility by altering levels of c-di-GMP. The chain is Diguanylate cyclase DgcN from Escherichia coli (strain K12).